Here is a 334-residue protein sequence, read N- to C-terminus: Aspartate carbamoyltransferase catalytic subunit (334 aa).

The carbamoyl phosphate site is built by arginine 71 and threonine 72. Lysine 99 contacts L-aspartate. Residues arginine 121, histidine 151, and glutamine 154 each contribute to the carbamoyl phosphate site. L-aspartate is bound by residues arginine 184 and arginine 239. The carbamoyl phosphate site is built by glycine 280 and proline 281.

It belongs to the aspartate/ornithine carbamoyltransferase superfamily. ATCase family. As to quaternary structure, heterododecamer (2C3:3R2) of six catalytic PyrB chains organized as two trimers (C3), and six regulatory PyrI chains organized as three dimers (R2).

The enzyme catalyses carbamoyl phosphate + L-aspartate = N-carbamoyl-L-aspartate + phosphate + H(+). It functions in the pathway pyrimidine metabolism; UMP biosynthesis via de novo pathway; (S)-dihydroorotate from bicarbonate: step 2/3. Its function is as follows. Catalyzes the condensation of carbamoyl phosphate and aspartate to form carbamoyl aspartate and inorganic phosphate, the committed step in the de novo pyrimidine nucleotide biosynthesis pathway. In Pseudomonas syringae pv. tomato (strain ATCC BAA-871 / DC3000), this protein is Aspartate carbamoyltransferase catalytic subunit.